The chain runs to 234 residues: Adenosine 5'-phosphosulfate reductase (234 aa).

Positions 120, 121, 203, and 206 each coordinate [4Fe-4S] cluster. Catalysis depends on cysteine 229, which acts as the Nucleophile; cysteine thiosulfonate intermediate.

The protein belongs to the PAPS reductase family. CysH subfamily. [4Fe-4S] cluster serves as cofactor.

The protein resides in the cytoplasm. It catalyses the reaction [thioredoxin]-disulfide + sulfite + AMP + 2 H(+) = adenosine 5'-phosphosulfate + [thioredoxin]-dithiol. It participates in sulfur metabolism; hydrogen sulfide biosynthesis; sulfite from sulfate. Functionally, catalyzes the formation of sulfite from adenosine 5'-phosphosulfate (APS) using thioredoxin as an electron donor. The chain is Adenosine 5'-phosphosulfate reductase from Bacillus cereus (strain 03BB102).